We begin with the raw amino-acid sequence, 512 residues long: Cytochrome P450 monooxygenase hkm5 (512 aa).

The chain crosses the membrane as a helical span at residues 18 to 38; it reads LIQLVRALLWVLVITIGGAIV. N184, N263, N275, N374, and N419 each carry an N-linked (GlcNAc...) asparagine glycan. Residue C456 participates in heme binding.

This sequence belongs to the cytochrome P450 family. Heme is required as a cofactor.

It localises to the membrane. It catalyses the reaction hancockiamide A + reduced [NADPH--hemoprotein reductase] + O2 = hancockiamide G + oxidized [NADPH--hemoprotein reductase] + 2 H2O + H(+). It carries out the reaction hancockiamide B + reduced [NADPH--hemoprotein reductase] + O2 = hancockiamide C + oxidized [NADPH--hemoprotein reductase] + 2 H2O + H(+). The catalysed reaction is hancockiamide D + reduced [NADPH--hemoprotein reductase] + O2 = hancockiamide H + oxidized [NADPH--hemoprotein reductase] + 2 H2O + H(+). It participates in secondary metabolite biosynthesis. In terms of biological role, cytochrome P450 monooxygenase; part of the gene cluster that mediates the biosynthesis of hancockiamides, an unusual new family of N-cinnamoylated piperazines. The NRPS hkm10 and the NmrA-like reductase hkm9 are proposed to convert two molecules of L-Phe to the intermediary piperazine called xenocockiamide A. Xenocockiamide A is then converted to hancockiamide D via a series of hydroxylations and O-methylations. The tyrosinase hkm6 may catalyze an aromatic hydroxylation, then the 2-oxoglutarate-dependent Fe(II) dioxygenase hkm4 and the FAD-dependent phenol hydroxylase hkm7 may catalyze consecutive hydroxylations to install 2 more hydroxy groups, and the methyltransferase hkm8 probably catalyzes two methylations using 2 molecules of S-adenosyl-L-methionine (SAM). The NRPS hkm11 activates and transfers trans-cinnamate supplied by the PAL hkm12 to hancockiamide D and produces hancockiamide A. NRPS Hkm11 has the flexibility to tolerate the bulky hancockiamide G as a substrate and the absence of the acetyl-transferase hkm3 opens up the opportunity for hkm11 to introduce a second N-cinnamoyl moiety. The cytochrome P450 monooxygenase hkm5 catalyzes the methylenedioxy bridge formation, converting hancockiamide A into hancockiamide G. Hkm5 can also convert hancockiamide B into hancockiamide C, and hancockiamide D into hancockiamide H. The N-acetyltransferase hkm3 finally transfers an acetyl group to 1-N of piperazine, converting hancockiamide A into hancockiamide B and hancockiamide G into hancockiamide C. This chain is Cytochrome P450 monooxygenase hkm5, found in Aspergillus hancockii.